The sequence spans 96 residues: Elicitor peptide 3 (96 aa).

Residues 1-73 (MENLRNGEDN…EEEEEDGMTI (73 aa)) constitute a propeptide that is removed on maturation. The tract at residues 32–96 (SGLESSSSSS…PSSGKGGKHN (65 aa)) is disordered. Positions 35 to 49 (ESSSSSSSSCDLSSS) are enriched in low complexity. Residues 52-71 (EEDESIDIKEEEEEEEEDGM) are compositionally biased toward acidic residues.

The protein belongs to the brassicaceae elicitor peptide family.

Elicitor of plant defense. The protein is Elicitor peptide 3 (PEP3) of Arabidopsis thaliana (Mouse-ear cress).